A 659-amino-acid polypeptide reads, in one-letter code: MKIKNYFIIVFIIIVLSTDVISSQSSIEDKMYTSLNSYPCTRIMTLNGQIGCSSSHGGDSGILYLIDSDESYHNYFSYNQQKDIIVVFDSNYFNKTLVLEMYSKKKMNGALVLTDIGKTYPYSPEDQYPIKQFGLYPDSNLNWNPNGDGFTYMNFPFPMFALELKTSIIIRNLSTINRDGKYPAYGAELDSFMQGAINAETCLRRGFCEPVGGQSIWSSFSEVIDQSKPIILVMLPIDATAFFRDLATGTDQSGYALTVLLSMLNTLQGVDKTKWDKEVIFAMWNSERWGYVGSTNFVNDLLNFNCTSLDSNNQNSCSSPPMLDLTFEQIKFENIYAIIEFNQIGRPVNSGKKTPNKLDIYNLVFHPNGGAGANQLMDVFSQSTQSYENSTIQFQKTTQNELPPCSSMSFIKEINKKSAPNFIGTLVITDHDYQYNNPYFGDEQDNSGNINTTTSTLFDMVQVFSKSIDLLAGGNGTVKVDDLFIREINVCLTQSITCNWVTKLMSTFPYNPIPNFYSGVYGVSPVNHITPIETRFIFRMATYLTQHRTNATNCTSDNDCDTSSSICVNKVCLYSNTHYHNAISLAFSFDNSKSSWTIVNTSYPVFVESNWDYTTVRLFQVGSYANEIWFLVSGLIELLLSVGIIFYIKKYLSKRYKLL.

An N-terminal signal peptide occupies residues 1-22 (MKIKNYFIIVFIIIVLSTDVIS). Topologically, residues 23 to 627 (SQSSIEDKMY…LFQVGSYANE (605 aa)) are extracellular. N-linked (GlcNAc...) asparagine glycosylation is found at N94, N172, N305, N389, N451, N475, N550, N553, and N600. Residues 628 to 648 (IWFLVSGLIELLLSVGIIFYI) form a helical membrane-spanning segment. The Cytoplasmic segment spans residues 649–659 (KKYLSKRYKLL).

Belongs to the nicastrin family. As to quaternary structure, homodimer. Component of the gamma-secretase complex, a complex composed of a presenilin homodimer, nicastrin, aph1 and pen2.

It localises to the membrane. Its function is as follows. Essential subunit of the gamma-secretase complex, an endoprotease complex that catalyzes the intramembrane cleavage of integral membrane proteins such as Notch receptors and APP (amyloid-beta precursor protein). It probably represents a stabilizing cofactor required for the assembly of the gamma-secretase complex. The chain is Nicastrin (ncstn) from Dictyostelium discoideum (Social amoeba).